The chain runs to 484 residues: UDP-N-acetylmuramoyl-L-alanyl-D-glutamate--L-lysine ligase (484 aa).

Serine 43 provides a ligand contact to UDP-N-acetyl-alpha-D-muramoyl-L-alanyl-D-glutamate. Residue glycine 119–threonine 125 participates in ATP binding. UDP-N-acetyl-alpha-D-muramoyl-L-alanyl-D-glutamate-binding positions include threonine 161 to threonine 162, serine 188, and arginine 196. Residue lysine 230 is modified to N6-carboxylysine. Residues aspartate 405 to asparagine 408 carry the L-lysine recognition motif motif.

Belongs to the MurCDEF family. MurE subfamily. Carboxylation is probably crucial for Mg(2+) binding and, consequently, for the gamma-phosphate positioning of ATP.

The protein resides in the cytoplasm. The enzyme catalyses UDP-N-acetyl-alpha-D-muramoyl-L-alanyl-D-glutamate + L-lysine + ATP = UDP-N-acetyl-alpha-D-muramoyl-L-alanyl-gamma-D-glutamyl-L-lysine + ADP + phosphate + H(+). Its pathway is cell wall biogenesis; peptidoglycan biosynthesis. Its function is as follows. Catalyzes the addition of L-lysine to the nucleotide precursor UDP-N-acetylmuramoyl-L-alanyl-D-glutamate (UMAG) in the biosynthesis of bacterial cell-wall peptidoglycan. The protein is UDP-N-acetylmuramoyl-L-alanyl-D-glutamate--L-lysine ligase of Streptococcus agalactiae serotype V (strain ATCC BAA-611 / 2603 V/R).